Consider the following 448-residue polypeptide: Probable glycine dehydrogenase (decarboxylating) subunit 1 (448 aa).

It belongs to the GcvP family. N-terminal subunit subfamily. As to quaternary structure, the glycine cleavage system is composed of four proteins: P, T, L and H. In this organism, the P 'protein' is a heterodimer of two subunits.

It carries out the reaction N(6)-[(R)-lipoyl]-L-lysyl-[glycine-cleavage complex H protein] + glycine + H(+) = N(6)-[(R)-S(8)-aminomethyldihydrolipoyl]-L-lysyl-[glycine-cleavage complex H protein] + CO2. Functionally, the glycine cleavage system catalyzes the degradation of glycine. The P protein binds the alpha-amino group of glycine through its pyridoxal phosphate cofactor; CO(2) is released and the remaining methylamine moiety is then transferred to the lipoamide cofactor of the H protein. This Lysinibacillus sphaericus (strain C3-41) protein is Probable glycine dehydrogenase (decarboxylating) subunit 1.